The primary structure comprises 452 residues: Chromosomal replication initiator protein DnaA (452 aa).

Positions 1-80 are domain I, interacts with DnaA modulators; that stretch reads MSSTVSTLWR…NNDQFMVKIQ (80 aa). Positions 80–114 are domain II; sequence QDGIKPTEKTTTNVEQKTQNENCHNEITSQQNYRS. A domain III, AAA+ region region spans residues 115–332; that stretch reads YLNKNHVFDN…GALNRVHAHA (218 aa). Glycine 160, glycine 162, lysine 163, and threonine 164 together coordinate ATP. Positions 333-452 are domain IV, binds dsDNA; it reads EFTGKAITID…WSNLIRTLSV (120 aa).

Belongs to the DnaA family. In terms of assembly, oligomerizes as a right-handed, spiral filament on DNA at oriC.

The protein resides in the cytoplasm. Plays an essential role in the initiation and regulation of chromosomal replication. ATP-DnaA binds to the origin of replication (oriC) to initiate formation of the DNA replication initiation complex once per cell cycle. Binds the DnaA box (a 9 base pair repeat at the origin) and separates the double-stranded (ds)DNA. Forms a right-handed helical filament on oriC DNA; dsDNA binds to the exterior of the filament while single-stranded (ss)DNA is stabiized in the filament's interior. The ATP-DnaA-oriC complex binds and stabilizes one strand of the AT-rich DNA unwinding element (DUE), permitting loading of DNA polymerase. After initiation quickly degrades to an ADP-DnaA complex that is not apt for DNA replication. Binds acidic phospholipids. The polypeptide is Chromosomal replication initiator protein DnaA (Histophilus somni (strain 129Pt) (Haemophilus somnus)).